A 465-amino-acid polypeptide reads, in one-letter code: Putative multidrug resistance protein MdtD (465 aa).

The next 13 helical transmembrane spans lie at 12-32 (LWIV…VNTA), 49-69 (SVIV…GWLA), 72-92 (IGVK…SLMC), 102-124 (ILSR…LTVM), 138-158 (FVTL…GFLV), 165-185 (WIFL…LLLM), 195-215 (FDIS…LALD), 219-239 (GLGL…IALG), 267-287 (LVGS…TPIF), 290-310 (IGLG…IIGS), 342-362 (LSLP…VLFF), 393-413 (LLSM…GILL), and 430-450 (SAFL…ALIF).

The protein belongs to the major facilitator superfamily. TCR/Tet family.

It is found in the cell inner membrane. The sequence is that of Putative multidrug resistance protein MdtD from Yersinia pseudotuberculosis serotype O:1b (strain IP 31758).